Reading from the N-terminus, the 331-residue chain is Phenylalanine--tRNA ligase alpha subunit (331 aa).

Glu-252 provides a ligand contact to Mg(2+).

It belongs to the class-II aminoacyl-tRNA synthetase family. Phe-tRNA synthetase alpha subunit type 1 subfamily. Tetramer of two alpha and two beta subunits. Mg(2+) serves as cofactor.

It is found in the cytoplasm. The enzyme catalyses tRNA(Phe) + L-phenylalanine + ATP = L-phenylalanyl-tRNA(Phe) + AMP + diphosphate + H(+). The polypeptide is Phenylalanine--tRNA ligase alpha subunit (Xanthomonas euvesicatoria pv. vesicatoria (strain 85-10) (Xanthomonas campestris pv. vesicatoria)).